Consider the following 126-residue polypeptide: Fluoride-specific ion channel FluC 2 (126 aa).

4 consecutive transmembrane segments (helical) span residues 11–31, 43–63, 69–89, and 93–113; these read IFLI…LCEL, VLGS…GFIG, AFGT…VQSF, and FFPA…GVFM. Glycine 76 and threonine 79 together coordinate Na(+).

Belongs to the fluoride channel Fluc/FEX (TC 1.A.43) family.

Its subcellular location is the cell membrane. It carries out the reaction fluoride(in) = fluoride(out). Its activity is regulated as follows. Na(+) is not transported, but it plays an essential structural role and its presence is essential for fluoride channel function. In terms of biological role, fluoride-specific ion channel. Important for reducing fluoride concentration in the cell, thus reducing its toxicity. The polypeptide is Fluoride-specific ion channel FluC 2 (Methanosarcina barkeri (strain Fusaro / DSM 804)).